The primary structure comprises 182 residues: ATP-dependent protease subunit HslV (182 aa).

Threonine 10 is a catalytic residue. Residues alanine 166, cysteine 169, and serine 172 each contribute to the Na(+) site.

It belongs to the peptidase T1B family. HslV subfamily. A double ring-shaped homohexamer of HslV is capped on each side by a ring-shaped HslU homohexamer. The assembly of the HslU/HslV complex is dependent on binding of ATP.

It is found in the cytoplasm. The catalysed reaction is ATP-dependent cleavage of peptide bonds with broad specificity.. Its activity is regulated as follows. Allosterically activated by HslU binding. Its function is as follows. Protease subunit of a proteasome-like degradation complex believed to be a general protein degrading machinery. The protein is ATP-dependent protease subunit HslV of Rickettsia typhi (strain ATCC VR-144 / Wilmington).